The sequence spans 361 residues: MTPTLRRKLEALAERREELQHLLSDPEVVSNNDKFRSLSRELSQLEPVALAMQEEARAKADLSAAEAMRNDPEMRELAEEEILAAQARLDELDAQLALLLVPRDPRDEGNLFLEVRAGTGGDEAAIFAGDLFRMYARYAERQGWKVEIESDSPGEHGGYKEVVARVVGRGAYSRLKFESGTHRVQRVPATESQGRIHTSAATVAIIPEADDVEEIVINPADLKVDTFRSSGAGGQHVNKTESAIRITHVPSGVVVECQTERSQHANRDKAMKRLKAQLVEAERSKAAAAKAQTRKLQVGSGDRSQRIRTYSFPQGRITDHRVEGLTLYDLPNIIEGDLDALIARLLHEHQADELARLSEGT.

Position 235 is an N5-methylglutamine (Q235).

Belongs to the prokaryotic/mitochondrial release factor family. In terms of processing, methylated by PrmC. Methylation increases the termination efficiency of RF1.

Its subcellular location is the cytoplasm. Peptide chain release factor 1 directs the termination of translation in response to the peptide chain termination codons UAG and UAA. In Xanthomonas campestris pv. campestris (strain 8004), this protein is Peptide chain release factor 1.